We begin with the raw amino-acid sequence, 887 residues long: Cadherin-1 (887 aa).

Positions 1–26 (MGRRWGSPALQRFPVLVLLLLLQVCG) are cleaved as a signal peptide. The propeptide occupies 27-160 (RRCDEAAPCQ…DPGFLRRQKR (134 aa)). 5 Cadherin domains span residues 161-268 (DWVI…KPVF), 269-381 (IKEV…IPIF), 382-493 (NPTM…PPVF), 494-599 (VPPI…DNGP), and 600-704 (TPEP…RRSY). The Extracellular segment spans residues 161-714 (DWVIPPISCL…IVGGLGVPAI (554 aa)). D263 is a binding site for Ca(2+). N-linked (GlcNAc...) asparagine glycosylation occurs at N291. D294 contributes to the Ca(2+) binding site. An N-linked (GlcNAc...) asparagine glycan is attached at N346. N-linked (GlcNAc...) asparagine glycosylation is found at N564 and N643. Residues 715-735 (LGILGGILALLILLLLLLLFA) form a helical membrane-spanning segment. Over 736–887 (RRRKVEKEPL…ELYGGGEDDE (152 aa)) the chain is Cytoplasmic. Residues 745–770 (LLPPEDDMRDNVYNYDEEGGGEEDQD) form a disordered region. Acidic residues predominate over residues 759–770 (YDEEGGGEEDQD).

Homodimer. Interacts with CTNNA2. In terms of tissue distribution, expressed in the liver.

It localises to the cell junction. Its subcellular location is the adherens junction. The protein localises to the cell membrane. It is found in the endosome. The protein resides in the golgi apparatus. It localises to the trans-Golgi network. Its subcellular location is the cytoplasm. The protein localises to the desmosome. Cadherins are calcium-dependent cell adhesion proteins. They preferentially interact with themselves in a homophilic manner in connecting cells; cadherins may thus contribute to the sorting of heterogeneous cell types. Promotes organization of radial actin fiber structure and cellular response to contractile forces, via anchoring of radial actin fibers to CDH1 junction complexes at the cell membrane. E-cadherin is a ligand for integrin alpha-E/beta-7. The polypeptide is Cadherin-1 (CDH1) (Gallus gallus (Chicken)).